The primary structure comprises 742 residues: Mechanosensitive ion channel protein 9 (742 aa).

Residues 1-117 (MAERRVSNGE…REENGGRSLR (117 aa)) are disordered. Over residues 17 to 26 (SDKEDSKDPR) the composition is skewed to basic and acidic residues. Phosphoserine occurs at positions 28 and 36. A compositionally biased stretch (basic and acidic residues) spans 105–117 (DSTREENGGRSLR). Phosphoserine is present on residues Ser142 and Ser145. 6 helical membrane-spanning segments follow: residues 180-200 (AFLELVVFMAILGALIVSLTI), 221-241 (MVTLSGMLVTNWFMHFVVFII), 261-281 (NVQVFIWFSLVLIAWICLFDG), 292-312 (FLDFITWTIVSLLVGSILFLV), 524-544 (LITGILTVITFIVWMVLLDIA), and 559-579 (LAFMIGSTCKNIFESFMFVFV).

Belongs to the MscS (TC 1.A.23) family. As to expression, detected in the epidermis, cortex, and endodermis of the root tip.

It localises to the cell membrane. Its function is as follows. Mechanosensitive channel that opens in response to stretch forces in the membrane lipid bilayer. The chain is Mechanosensitive ion channel protein 9 (MSL9) from Arabidopsis thaliana (Mouse-ear cress).